The chain runs to 362 residues: Phosphoserine aminotransferase (362 aa).

L-glutamate is bound at residue R43. Pyridoxal 5'-phosphate-binding positions include A77–R78, W103, T153, D173, and Q196. Residue K197 is modified to N6-(pyridoxal phosphate)lysine.

It belongs to the class-V pyridoxal-phosphate-dependent aminotransferase family. SerC subfamily. As to quaternary structure, homodimer. The cofactor is pyridoxal 5'-phosphate.

It localises to the cytoplasm. It catalyses the reaction O-phospho-L-serine + 2-oxoglutarate = 3-phosphooxypyruvate + L-glutamate. The catalysed reaction is 4-(phosphooxy)-L-threonine + 2-oxoglutarate = (R)-3-hydroxy-2-oxo-4-phosphooxybutanoate + L-glutamate. It participates in amino-acid biosynthesis; L-serine biosynthesis; L-serine from 3-phospho-D-glycerate: step 2/3. The protein operates within cofactor biosynthesis; pyridoxine 5'-phosphate biosynthesis; pyridoxine 5'-phosphate from D-erythrose 4-phosphate: step 3/5. Functionally, catalyzes the reversible conversion of 3-phosphohydroxypyruvate to phosphoserine and of 3-hydroxy-2-oxo-4-phosphonooxybutanoate to phosphohydroxythreonine. The chain is Phosphoserine aminotransferase from Legionella pneumophila (strain Corby).